A 261-amino-acid polypeptide reads, in one-letter code: Bcl-2-binding component 3, isoforms 3/4 (261 aa).

The disordered stretch occupies residues 27 to 261 (QICGPRERHG…ASAGDFLCTM (235 aa)). Low complexity predominate over residues 40-50 (PGGQLPGARRG). The segment covering 53–63 (PRRPAPLPARP) has biased composition (pro residues). A compositionally biased stretch (low complexity) spans 64-73 (PGALGSVLRP). Composition is skewed to basic residues over residues 74 to 87 (LRAR…RPHP) and 95 to 106 (RPHRPTRRHRRP). Residues 124-146 (PGRSSALALAGGAAPGVARAQRP) are compositionally biased toward low complexity. Residues 147–171 (GGSGGRSHPGGPGSPRGGGTVGPGD) show a composition bias toward gly residues. Low complexity predominate over residues 172–197 (RGPAAADGGRPQRTVRAAETRGAAAA).

As to quaternary structure, does not interact with BCL2.

Does not affect cell growth. The polypeptide is Bcl-2-binding component 3, isoforms 3/4 (BBC3) (Homo sapiens (Human)).